Consider the following 149-residue polypeptide: Large ribosomal subunit protein bL9 (149 aa).

At Lys89 the chain carries N6-acetyllysine.

It belongs to the bacterial ribosomal protein bL9 family.

Functionally, binds to the 23S rRNA. This chain is Large ribosomal subunit protein bL9, found in Shigella boydii serotype 18 (strain CDC 3083-94 / BS512).